The primary structure comprises 570 residues: Glutamate--tRNA ligase (570 aa).

The 'HIGH' region motif lies at 107-117 (PNPDFVLHLGS).

Belongs to the class-I aminoacyl-tRNA synthetase family. Glutamate--tRNA ligase type 2 subfamily.

The protein localises to the cytoplasm. The catalysed reaction is tRNA(Glu) + L-glutamate + ATP = L-glutamyl-tRNA(Glu) + AMP + diphosphate. Functionally, catalyzes the attachment of glutamate to tRNA(Glu) in a two-step reaction: glutamate is first activated by ATP to form Glu-AMP and then transferred to the acceptor end of tRNA(Glu). This Pyrobaculum aerophilum (strain ATCC 51768 / DSM 7523 / JCM 9630 / CIP 104966 / NBRC 100827 / IM2) protein is Glutamate--tRNA ligase.